The following is a 486-amino-acid chain: Cardiolipin synthase A (486 aa).

Helical transmembrane passes span 3–23 (TVYT…IAGV) and 38–58 (MAWL…YLAV). 2 PLD phosphodiesterase domains span residues 219 to 246 (MDLR…VDPR) and 399 to 426 (EGGL…DMRS). Active-site residues include histidine 224, lysine 226, aspartate 231, histidine 404, lysine 406, and aspartate 411.

The protein belongs to the phospholipase D family. Cardiolipin synthase subfamily. ClsA sub-subfamily.

It is found in the cell inner membrane. It catalyses the reaction 2 a 1,2-diacyl-sn-glycero-3-phospho-(1'-sn-glycerol) = a cardiolipin + glycerol. In terms of biological role, catalyzes the reversible phosphatidyl group transfer from one phosphatidylglycerol molecule to another to form cardiolipin (CL) (diphosphatidylglycerol) and glycerol. This chain is Cardiolipin synthase A, found in Shigella boydii serotype 4 (strain Sb227).